The primary structure comprises 720 residues: Fatty acid oxidation complex subunit alpha (720 aa).

The interval 1 to 189 is enoyl-CoA hydratase/isomerase; sequence MIYQGETLSV…KLGLVDAVVA (189 aa). Aspartate 296 is a substrate binding site. The tract at residues 311 to 720 is 3-hydroxyacyl-CoA dehydrogenase; the sequence is QPTKKGVVLG…ESYYTQQVNA (410 aa). NAD(+) contacts are provided by residues methionine 324, aspartate 343, 400-402, lysine 407, and serine 429; that span reads VVE. Histidine 450 (for 3-hydroxyacyl-CoA dehydrogenase activity) is an active-site residue. Asparagine 453 provides a ligand contact to NAD(+). 2 residues coordinate substrate: asparagine 500 and tyrosine 660.

In the N-terminal section; belongs to the enoyl-CoA hydratase/isomerase family. This sequence in the C-terminal section; belongs to the 3-hydroxyacyl-CoA dehydrogenase family. As to quaternary structure, heterotetramer of two alpha chains (FadB) and two beta chains (FadA).

It carries out the reaction a (3S)-3-hydroxyacyl-CoA + NAD(+) = a 3-oxoacyl-CoA + NADH + H(+). The enzyme catalyses a (3S)-3-hydroxyacyl-CoA = a (2E)-enoyl-CoA + H2O. It catalyses the reaction a 4-saturated-(3S)-3-hydroxyacyl-CoA = a (3E)-enoyl-CoA + H2O. The catalysed reaction is (3S)-3-hydroxybutanoyl-CoA = (3R)-3-hydroxybutanoyl-CoA. It carries out the reaction a (3Z)-enoyl-CoA = a 4-saturated (2E)-enoyl-CoA. The enzyme catalyses a (3E)-enoyl-CoA = a 4-saturated (2E)-enoyl-CoA. The protein operates within lipid metabolism; fatty acid beta-oxidation. Functionally, involved in the aerobic and anaerobic degradation of long-chain fatty acids via beta-oxidation cycle. Catalyzes the formation of 3-oxoacyl-CoA from enoyl-CoA via L-3-hydroxyacyl-CoA. It can also use D-3-hydroxyacyl-CoA and cis-3-enoyl-CoA as substrate. This chain is Fatty acid oxidation complex subunit alpha, found in Photobacterium profundum (strain SS9).